The following is a 282-amino-acid chain: Probable endonuclease 4 (282 aa).

Zn(2+)-binding residues include H66, H106, E143, D177, H180, H214, D227, H229, and E259.

Belongs to the AP endonuclease 2 family. It depends on Zn(2+) as a cofactor.

It catalyses the reaction Endonucleolytic cleavage to 5'-phosphooligonucleotide end-products.. In terms of biological role, endonuclease IV plays a role in DNA repair. It cleaves phosphodiester bonds at apurinic or apyrimidinic (AP) sites, generating a 3'-hydroxyl group and a 5'-terminal sugar phosphate. This is Probable endonuclease 4 from Nitratidesulfovibrio vulgaris (strain ATCC 29579 / DSM 644 / CCUG 34227 / NCIMB 8303 / VKM B-1760 / Hildenborough) (Desulfovibrio vulgaris).